The sequence spans 228 residues: UPF0134 protein MPN_137 (228 aa).

This sequence belongs to the UPF0134 family.

The sequence is that of UPF0134 protein MPN_137 from Mycoplasma pneumoniae (strain ATCC 29342 / M129 / Subtype 1) (Mycoplasmoides pneumoniae).